A 222-amino-acid polypeptide reads, in one-letter code: Translation initiation factor 6 (222 aa).

It belongs to the eIF-6 family.

Binds to the 50S ribosomal subunit and prevents its association with the 30S ribosomal subunit to form the 70S initiation complex. The protein is Translation initiation factor 6 of Methanocorpusculum labreanum (strain ATCC 43576 / DSM 4855 / Z).